A 361-amino-acid polypeptide reads, in one-letter code: Prostaglandin E2 receptor EP2 subtype (361 aa).

A compositionally biased stretch (polar residues) spans Met1 to Ser10. The interval Met1 to Ser21 is disordered. Over Met1–Glu23 the chain is Extracellular. A glycan (N-linked (GlcNAc...) asparagine) is linked at Asn6. Residues Ser24–Ala47 traverse the membrane as a helical segment. Over Arg48–Ser65 the chain is Cytoplasmic. A helical membrane pass occupies residues Leu66 to Ala91. The Extracellular segment spans residues Ser92–Tyr111. A glycan (N-linked (GlcNAc...) asparagine) is linked at Asn96. A disulfide bridge links Cys109 with Cys187. A helical transmembrane segment spans residues Phe112–Leu132. At Glu133–Arg151 the chain is on the cytoplasmic side. The chain crosses the membrane as a helical span at residues Gly152–Gly176. The Extracellular segment spans residues Gln177–Gln198. A helical membrane pass occupies residues Leu199–Ile223. Residues Arg224 to His262 lie on the Cytoplasmic side of the membrane. Residues Gly230 to Arg253 form a disordered region. The helical transmembrane segment at Leu263–Met286 threads the bilayer. A glycan (N-linked (GlcNAc...) asparagine) is linked at Asn287. Residues Asn287 to Gln299 are Extracellular-facing. Residues Ala300 to Leu323 traverse the membrane as a helical segment. Over Arg324 to Ser361 the chain is Cytoplasmic.

The protein belongs to the G-protein coupled receptor 1 family.

Its subcellular location is the cell membrane. Its function is as follows. Receptor for prostaglandin E2 (PGE2). The activity of this receptor is mediated by G(s) proteins that stimulate adenylate cyclase. The subsequent raise in intracellular cAMP is responsible for the relaxing effect of this receptor on smooth muscle. The polypeptide is Prostaglandin E2 receptor EP2 subtype (PTGER2) (Canis lupus familiaris (Dog)).